Consider the following 399-residue polypeptide: Tyrosine--tRNA ligase (399 aa).

Residues 42–51 carry the 'HIGH' region motif; sequence PTAPDLHLGH. Positions 226 to 230 match the 'KMSKS' region motif; that stretch reads KMSKS. K229 contributes to the ATP binding site. In terms of domain architecture, S4 RNA-binding spans 336 to 396; that stretch reads MPIAAVLNKA…GKKAFARITL (61 aa).

Belongs to the class-I aminoacyl-tRNA synthetase family. TyrS type 2 subfamily. As to quaternary structure, homodimer.

The protein localises to the cytoplasm. The enzyme catalyses tRNA(Tyr) + L-tyrosine + ATP = L-tyrosyl-tRNA(Tyr) + AMP + diphosphate + H(+). In terms of biological role, catalyzes the attachment of tyrosine to tRNA(Tyr) in a two-step reaction: tyrosine is first activated by ATP to form Tyr-AMP and then transferred to the acceptor end of tRNA(Tyr). This chain is Tyrosine--tRNA ligase, found in Pseudomonas fluorescens (strain Pf0-1).